We begin with the raw amino-acid sequence, 29 residues long: Cytochrome b6-f complex subunit 8 (29 aa).

A helical membrane pass occupies residues 3 to 23 (ITSIAWGALMVVFTFSLSLVV).

It belongs to the PetN family. The 4 large subunits of the cytochrome b6-f complex are cytochrome b6, subunit IV (17 kDa polypeptide, PetD), cytochrome f and the Rieske protein, while the 4 small subunits are PetG, PetL, PetM and PetN. The complex functions as a dimer.

The protein resides in the plastid membrane. Its function is as follows. Component of the cytochrome b6-f complex, which mediates electron transfer between photosystem II (PSII) and photosystem I (PSI), cyclic electron flow around PSI, and state transitions. This Aneura mirabilis (Parasitic liverwort) protein is Cytochrome b6-f complex subunit 8.